The chain runs to 196 residues: Interferon lambda-3 (196 aa).

The first 21 residues, 1 to 21 (MTGDCMPVLVLMAAVLTVTGA), serve as a signal peptide directing secretion. Intrachain disulfides connect cysteine 37/cysteine 136, cysteine 71/cysteine 169, and cysteine 188/cysteine 195.

Belongs to the lambda interferon family.

It localises to the secreted. Cytokine with antiviral, antitumour and immunomodulatory activities. Plays a critical role in the antiviral host defense, predominantly in the epithelial tissues. Acts as a ligand for the heterodimeric class II cytokine receptor composed of IL10RB and IFNLR1, and receptor engagement leads to the activation of the JAK/STAT signaling pathway resulting in the expression of IFN-stimulated genes (ISG), which mediate the antiviral state. Has a restricted receptor distribution and therefore restricted targets: is primarily active in epithelial cells and this cell type-selective action is because of the epithelial cell-specific expression of its receptor IFNLR1. Seems not to be essential for early virus-activated host defense in vaginal infection, but plays an important role in Toll-like receptor (TLR)-induced antiviral defense. Plays a significant role in the antiviral immune defense in the intestinal epithelium. Exerts an immunomodulatory effect by up-regulating MHC class I antigen expression. In Homo sapiens (Human), this protein is Interferon lambda-3 (IFNL3).